The chain runs to 782 residues: E3 UFM1-protein ligase 1 homolog (782 aa).

The segment at Val405–Lys478 is disordered.

This sequence belongs to the UFL1 family.

E3 UFM1-protein ligase that mediates ufmylation of target proteins. The protein is E3 UFM1-protein ligase 1 homolog of Drosophila sechellia (Fruit fly).